The primary structure comprises 166 residues: MYIDTAELCDIYLDQIDVVEPIFSSFGGKSTFFGKITTIKCFENNGLISEILEENGEGRVLLIDGGGAVRRALIDANLAQLAADNGWEGIIVYGAIRQLQQLENINIGIQALAPIPVGSDEQSIGETDVPVNFGGVTFFPDDYVYADLTGIILSQEPLDLEEFDSL.

Belongs to the RraA family. In terms of assembly, homotrimer. Binds to both RNA-binding sites in the C-terminal region of Rne and to RhlB.

The protein resides in the cytoplasm. In terms of biological role, globally modulates RNA abundance by binding to RNase E (Rne) and regulating its endonucleolytic activity. Can modulate Rne action in a substrate-dependent manner by altering the composition of the degradosome. Modulates RNA-binding and helicase activities of the degradosome. The chain is Regulator of ribonuclease activity A from Histophilus somni (strain 129Pt) (Haemophilus somnus).